Consider the following 96-residue polypeptide: Large ribosomal subunit protein eL21 (96 aa).

It belongs to the eukaryotic ribosomal protein eL21 family.

This chain is Large ribosomal subunit protein eL21, found in Methanothrix thermoacetophila (strain DSM 6194 / JCM 14653 / NBRC 101360 / PT) (Methanosaeta thermophila).